Here is a 247-residue protein sequence, read N- to C-terminus: MGTSSTDSQQAGHRRCSTSNTSAENLTCLSLPGSPGKTAPLPGPAQAGAGQPLPKGCAAVKAEVGIPAPHTSQEVRIHIRRLLSWAAPGACGLRSTPCALPQALPQARPCPGRWFFPGCSLPTGGAQTILSLWTWRHFLNWALQQREENSGRARRVPPVPRTAPVSKGEGSHPPQNSNGEKVKTITPDVGLHQSLTSDPTVAVLRAKRAPEAHPPRSCSGSLTARVCHMGVCQGQGDTEDGRMTLMG.

The segment covering 1–28 (MGTSSTDSQQAGHRRCSTSNTSAENLTC) has biased composition (polar residues). Disordered regions lie at residues 1 to 52 (MGTS…AGQP) and 147 to 183 (EENSGRARRVPPVPRTAPVSKGEGSHPPQNSNGEKVK).

Post-translationally, phosphorylated. N-glycosylated. As to expression, expressed by cementoblasts, a subpopulation of periodontal ligament cells and cells located around vessels in periodontium (at protein level).

It is found in the cytoplasm. Its subcellular location is the nucleus. May play a role in development of the periodontium which surrounds and supports the teeth by promoting the differentiation of multi-potent cells from the periodontal ligament into cementoblasts to form the cementum. Binds hydroxyapatite and may promote the biomineralization of the cementum. Also promotes cell proliferation. The protein is Cementoblastoma-derived protein 1 of Homo sapiens (Human).